The following is a 478-amino-acid chain: RNA-binding protein 42 (478 aa).

Positions 1 to 20 are enriched in low complexity; it reads MASAMAGAGPAPGLPVAGGP. The disordered stretch occupies residues 1 to 33; the sequence is MASAMAGAGPAPGLPVAGGPVVPGPGVGIPGKS. A2 bears the N-acetylalanine mark. Residue S133 is modified to Phosphoserine. Asymmetric dimethylarginine is present on residues R151, R156, R166, and R179. Disordered stretches follow at residues 171–207 and 317–354; these read LSSA…MLPP and SLRP…PEKL. Residues 193–205 are compositionally biased toward pro residues; the sequence is PPLPGPPGPPMML. The necessary for interaction with HNRNPK stretch occupies residues 234 to 478; it reads ELGLGLGLGL…QKEKKKLGLR (245 aa). Positions 343 to 354 are enriched in basic and acidic residues; sequence GEDKKKGKPEKL. An RRM domain is found at 379-457; that stretch reads FRIFCGDLGN…RPIKLRKSMW (79 aa).

The protein belongs to the RRM RBM42 family. As to quaternary structure, interacts with HNRNPK. Expressed in cell lines (at protein level). Expressed in heart, brain, spleen, lung, liver, skeletal muscle, kidney and testis.

It is found in the nucleus. The protein localises to the cytoplasm. Functionally, binds (via the RRM domain) to the 3'-untranslated region (UTR) of CDKN1A mRNA. The chain is RNA-binding protein 42 (Rbm42) from Mus musculus (Mouse).